Here is a 90-residue protein sequence, read N- to C-terminus: Small ribosomal subunit protein uS15c (90 aa).

This sequence belongs to the universal ribosomal protein uS15 family. As to quaternary structure, part of the 30S ribosomal subunit.

Its subcellular location is the plastid. The protein resides in the chloroplast. This Populus alba (White poplar) protein is Small ribosomal subunit protein uS15c (rps15).